A 547-amino-acid chain; its full sequence is Elongator complex protein 3 (547 aa).

Residues 82 to 372 (RTASGIAVVA…YRVQRDIPMP (291 aa)) form the Radical SAM core domain. Cys99, Cys109, and Cys112 together coordinate [4Fe-4S] cluster. Residue Ser161 is modified to Phosphoserine. Lys164 lines the acetyl-CoA pocket. Tyr202 carries the post-translational modification Phosphotyrosine. An N6-methyllysine modification is found at Lys229. Position 251 is a phosphotyrosine (Tyr251). Residues 396–547 (IQCRDVRTRE…QGPYMVKTLE (152 aa)) form the N-acetyltransferase domain. Acetyl-CoA is bound by residues 474 to 477 (ELHV), 497 to 499 (FGM), and Tyr530.

It belongs to the ELP3 family. In terms of assembly, component of the elongator complex which consists of ELP1, ELP2, ELP3, ELP4, ELP5 and ELP6. ELP1, ELP2 and ELP3 form the elongator core complex. Interacts with alpha-tubulin. [4Fe-4S] cluster serves as cofactor. In terms of processing, tyrosine-phosphorylated; phosphorylation on Tyr-202 does not affect elongator complex integrity or ELP3 protein stability. Also serine/threonine-phosphorylated.

Its subcellular location is the cytoplasm. The protein resides in the nucleus. The enzyme catalyses uridine(34) in tRNA + acetyl-CoA + S-adenosyl-L-methionine + H2O = 5-(carboxymethyl)uridine(34) in tRNA + 5'-deoxyadenosine + L-methionine + CoA + 2 H(+). It functions in the pathway tRNA modification; 5-methoxycarbonylmethyl-2-thiouridine-tRNA biosynthesis. Its function is as follows. Catalytic tRNA acetyltransferase subunit of the elongator complex which is required for multiple tRNA modifications, including mcm5U (5-methoxycarbonylmethyl uridine), mcm5s2U (5-methoxycarbonylmethyl-2-thiouridine), and ncm5U (5-carbamoylmethyl uridine). In the elongator complex, acts as a tRNA uridine(34) acetyltransferase by mediating formation of carboxymethyluridine in the wobble base at position 34 in tRNAs. May also act as a protein lysine acetyltransferase by mediating acetylation of target proteins; such activity is however unclear in vivo and recent evidences suggest that ELP3 primarily acts as a tRNA acetyltransferase. Involved in neurogenesis: regulates the migration and branching of projection neurons in the developing cerebral cortex, through a process depending on alpha-tubulin acetylation. Required for acetylation of GJA1 in the developing cerebral cortex. In Bos taurus (Bovine), this protein is Elongator complex protein 3.